A 978-amino-acid chain; its full sequence is Receptor like protein 21 (978 aa).

The signal sequence occupies residues 1–27 (MLLAMEGKLFLCQYLIWVMLLLGQLHG). Topologically, residues 28–930 (CTSCIEKERE…EEDDKAAIDM (903 aa)) are extracellular. N-linked (GlcNAc...) asparagine glycans are attached at residues Asn-64, Asn-79, Asn-102, Asn-116, and Asn-155. LRR repeat units follow at residues 141–167 (LRNL…AATS), 169–189 (TTLI…GLKD), 190–213 (LTNL…LIHL), 214–237 (KKLK…ELQN), 238–262 (LINL…VFCK), 264–287 (KNLR…LGSL), 288–310 (KKLR…SFSS), 312–335 (ESLE…PLTN), 337–361 (TNLK…TWQP), 362–385 (NFQL…LLYQ), 386–409 (KKLR…LLTN), 410–432 (NPEL…PTMV), 433–455 (HNLQ…MDHA), 457–480 (PNLV…IGEM), 481–504 (KNIS…FVTG), 506–529 (VSIM…ETNF), 530–553 (PSLD…LSNS), 554–577 (TMLR…LFEF), 579–601 (YLDY…LLGM), 602–625 (PFLS…VDSE), 627–646 (GIYM…DTLL), 647–671 (KSVQ…DTQS), 673–693 (NILL…LCDL), 694–716 (SNVR…CLSN), 788–811 (LRLM…ELGD), 812–835 (LLKL…SFSK), 837–859 (IDVE…LLSS), and 860–885 (LTSL…QFNT). N-linked (GlcNAc...) asparagine glycosylation occurs at Asn-204. Asn-335 carries an N-linked (GlcNAc...) asparagine glycan. 2 N-linked (GlcNAc...) asparagine glycosylation sites follow: Asn-397 and Asn-420. N-linked (GlcNAc...) asparagine glycans are attached at residues Asn-463, Asn-482, and Asn-492. Asn-552 carries N-linked (GlcNAc...) asparagine glycosylation. Asn-636 carries N-linked (GlcNAc...) asparagine glycosylation. N-linked (GlcNAc...) asparagine glycosylation is found at Asn-681 and Asn-716. An N-linked (GlcNAc...) asparagine glycan is attached at Asn-819. Asn-872 carries an N-linked (GlcNAc...) asparagine glycan. The interval 902 to 922 (TSRSCETNKSPEEADNGQEEE) is disordered. Residues 931–951 (MVFYFSTASIYVTALIGVLVL) traverse the membrane as a helical segment. The Cytoplasmic portion of the chain corresponds to 952–978 (MCFDCPWRRAWLRIVDAFIASAKHVLP).

It belongs to the RLP family.

The protein localises to the cell membrane. The chain is Receptor like protein 21 from Arabidopsis thaliana (Mouse-ear cress).